The primary structure comprises 321 residues: Proline-rich protein 2 (321 aa).

Positions 1–26 (MRILPKSGGGALCLLFVFALCSVAHS) are cleaved as a signal peptide. 24 consecutive repeat copies span residues 168–172 (PPLNL), 173–176 (PPLT), 177–181 (FPKIK), 185–189 (PPIYK), 190–194 (PPVVI), 198–202 (PCPPK), 207–211 (PIYKP), 212–217 (PVPIYK), 218–223 (PPVPIY), 225–229 (PPVVI), 234–238 (CPPKI), 240–244 (KPIYK), 245–251 (PPVPIYK), 252–256 (PPVVI), 262–266 (PPLHK), 267–271 (PIYKH), 272–276 (PVPIY), 277–281 (KPIFK), 282–286 (PPVVV), 288–292 (PKKPC), 293–297 (PPLPK), 298–302 (FPHFP), 303–307 (PKYIP), and 315–319 (PPFPS). Residues 168 to 319 (PPLNLPPLTF…KFGKWPPFPS (152 aa)) form a 24 X 5 AA approximate repeats region.

This sequence belongs to the plant proline-rich protein superfamily. Mostly expressed in aerial organs, particularly in expanding leaves, stems, flowers, and siliques.

The protein localises to the secreted. It is found in the cell wall. This Arabidopsis thaliana (Mouse-ear cress) protein is Proline-rich protein 2 (PRP2).